Here is a 115-residue protein sequence, read N- to C-terminus: UPF0102 protein NMB2089 (115 aa).

The protein belongs to the UPF0102 family.

This chain is UPF0102 protein NMB2089, found in Neisseria meningitidis serogroup B (strain ATCC BAA-335 / MC58).